We begin with the raw amino-acid sequence, 231 residues long: Large ribosomal subunit protein uL1 (231 aa).

Belongs to the universal ribosomal protein uL1 family. In terms of assembly, part of the 50S ribosomal subunit.

In terms of biological role, binds directly to 23S rRNA. The L1 stalk is quite mobile in the ribosome, and is involved in E site tRNA release. Its function is as follows. Protein L1 is also a translational repressor protein, it controls the translation of the L11 operon by binding to its mRNA. The sequence is that of Large ribosomal subunit protein uL1 from Dechloromonas aromatica (strain RCB).